The sequence spans 118 residues: UPF0342 protein BCE_0953 (118 aa).

The protein belongs to the UPF0342 family.

In Bacillus cereus (strain ATCC 10987 / NRS 248), this protein is UPF0342 protein BCE_0953.